The primary structure comprises 89 residues: Small ribosomal subunit protein bS20 (89 aa).

The segment at 1 to 26 (MANIKASKKDALTSEKRRKKNSSRRS) is disordered. Basic residues predominate over residues 16 to 26 (KRRKKNSSRRS).

It belongs to the bacterial ribosomal protein bS20 family.

Functionally, binds directly to 16S ribosomal RNA. The protein is Small ribosomal subunit protein bS20 of Buchnera aphidicola subsp. Acyrthosiphon pisum (strain 5A).